The chain runs to 294 residues: ATP synthase gamma chain (294 aa).

This sequence belongs to the ATPase gamma chain family. F-type ATPases have 2 components, CF(1) - the catalytic core - and CF(0) - the membrane proton channel. CF(1) has five subunits: alpha(3), beta(3), gamma(1), delta(1), epsilon(1). CF(0) has three main subunits: a, b and c.

The protein resides in the cell inner membrane. In terms of biological role, produces ATP from ADP in the presence of a proton gradient across the membrane. The gamma chain is believed to be important in regulating ATPase activity and the flow of protons through the CF(0) complex. The protein is ATP synthase gamma chain of Campylobacter jejuni subsp. jejuni serotype O:2 (strain ATCC 700819 / NCTC 11168).